A 603-amino-acid chain; its full sequence is Elongation factor 4 (603 aa).

Positions 7–189 (SRIRNFCIIA…SIVHLVPPPS (183 aa)) constitute a tr-type G domain. GTP-binding positions include 19-24 (DHGKST) and 136-139 (NKID).

The protein belongs to the TRAFAC class translation factor GTPase superfamily. Classic translation factor GTPase family. LepA subfamily.

The protein resides in the cell inner membrane. It carries out the reaction GTP + H2O = GDP + phosphate + H(+). Its function is as follows. Required for accurate and efficient protein synthesis under certain stress conditions. May act as a fidelity factor of the translation reaction, by catalyzing a one-codon backward translocation of tRNAs on improperly translocated ribosomes. Back-translocation proceeds from a post-translocation (POST) complex to a pre-translocation (PRE) complex, thus giving elongation factor G a second chance to translocate the tRNAs correctly. Binds to ribosomes in a GTP-dependent manner. This is Elongation factor 4 from Crocosphaera subtropica (strain ATCC 51142 / BH68) (Cyanothece sp. (strain ATCC 51142)).